The following is a 148-amino-acid chain: Large ribosomal subunit protein bL9 (148 aa).

Belongs to the bacterial ribosomal protein bL9 family.

In terms of biological role, binds to the 23S rRNA. The sequence is that of Large ribosomal subunit protein bL9 from Marinobacter nauticus (strain ATCC 700491 / DSM 11845 / VT8) (Marinobacter aquaeolei).